Here is a 255-residue protein sequence, read N- to C-terminus: AA9 family lytic polysaccharide monooxygenase D (255 aa).

Residues 1-19 (MYRTLGSIALLAGGAAAHG) form the signal peptide. H18 and H92 together coordinate Cu(2+). Intrachain disulfides connect C65–C189 and C104–C111. The N-linked (GlcNAc...) asparagine glycan is linked to N152. O2-binding residues include H178 and Q184. A Cu(2+)-binding site is contributed by Y186. Residue N220 is glycosylated (N-linked (GlcNAc...) asparagine).

Belongs to the polysaccharide monooxygenase AA9 family. The cofactor is Cu(2+).

The protein localises to the secreted. The enzyme catalyses [(1-&gt;4)-beta-D-glucosyl]n+m + reduced acceptor + O2 = 4-dehydro-beta-D-glucosyl-[(1-&gt;4)-beta-D-glucosyl]n-1 + [(1-&gt;4)-beta-D-glucosyl]m + acceptor + H2O.. In terms of biological role, lytic polysaccharide monooxygenase (LPMO) that depolymerizes crystalline and amorphous polysaccharides via the oxidation of scissile alpha- or beta-(1-4)-glycosidic bonds, yielding specifically C1 oxidation product. Catalysis by LPMOs requires the reduction of the active-site copper from Cu(II) to Cu(I) by a reducing agent and H(2)O(2) or O(2) as a cosubstrate. Is active on regenerated amorphous cellulose (RAC) in the presence of ascorbic acid or 3-methylcatechol. Also acts on phosphoric acid swollen cellulose (PASC) as a substrate. The protein is AA9 family lytic polysaccharide monooxygenase D of Thermothelomyces thermophilus (strain ATCC 42464 / BCRC 31852 / DSM 1799) (Sporotrichum thermophile).